The following is a 345-amino-acid chain: D(2) dopamine receptor B (345 aa).

Residues 1 to 10 lie on the Extracellular side of the membrane; the sequence is EWRFSRIHCD. C9 and C84 are joined by a disulfide. A helical membrane pass occupies residues 11 to 32; it reads IFVTLDVMMCTASILNLCAISI. The Cytoplasmic segment spans residues 33–53; that stretch reads DRYTAVAMPMLYNTRYSSKRR. The helical transmembrane segment at 54 to 74 threads the bilayer; sequence VTVMISVVWVLSFAISCPLLF. Topologically, residues 75–90 are extracellular; it reads GLNNTASTVCIIDNPA. N77 carries N-linked (GlcNAc...) asparagine glycosylation. Residues 91–115 form a helical membrane-spanning segment; the sequence is FVIYSSIVSFYVPFIVTLLVYVQIY. The Cytoplasmic segment spans residues 116–275; it reads IVLRKRRKRV…SQHKEKKATQ (160 aa). Residues 166–177 are compositionally biased toward basic and acidic residues; that stretch reads KKKVEAGNHPED. The interval 166-199 is disordered; sequence KKKVEAGNHPEDMEMEMMSSTSPPEKTKHKSASP. Residues 276–297 traverse the membrane as a helical segment; it reads MLAIVLGVFIICWLPFFITHIL. The Extracellular segment spans residues 298-311; the sequence is NMHCNCNIPQALYS. Cysteines 301 and 303 form a disulfide. A helical membrane pass occupies residues 312-333; sequence AFTWLGYVNSAVNPIIYTTFNV. Over 334–345 the chain is Cytoplasmic; it reads EFRKAFIKILHC. A lipid anchor (S-palmitoyl cysteine) is attached at C345.

The protein belongs to the G-protein coupled receptor 1 family. Post-translationally, palmitoylated. Palmitoylation is probably required for proper localization to the plasma membrane and stability of the receptor. Brain; pituitary.

Its subcellular location is the cell membrane. It is found in the golgi apparatus membrane. Its function is as follows. This is one of the five types (D1 to D5) of receptors for dopamine. The activity of this receptor is mediated by G proteins which inhibits adenylyl cyclase. In Xenopus D2R is involved in the regulation of the melanotrope cells of the intermediate pituitary during background adaptation of the animal. This chain is D(2) dopamine receptor B (drd2-b), found in Xenopus laevis (African clawed frog).